Reading from the N-terminus, the 474-residue chain is Synaptotagmin-17 (474 aa).

Residues 60 to 112 (WLMASRSSDKDGDSVHTASEVPLTPRTNSPDGRRSSSDTSKSTYSLTRRISSL) are disordered. Residues 96–112 (SDTSKSTYSLTRRISSL) show a composition bias toward low complexity. Phosphoserine is present on residues Ser-118 and Ser-119. C2 domains follow at residues 184–310 (QLGM…HWWK) and 321–455 (ELGE…EQWH).

This sequence belongs to the synaptotagmin family. In terms of tissue distribution, expressed abundantly in brain (frontal and temporal lobes, hippocampus, hypothalamus, amygdala, substantia nigra, and pituitary), kidney, and prostate. Expressed in fetal brain, kidney and lung. Expressed in melanocytes.

It localises to the membrane. Its function is as follows. Plays a role in dendrite formation by melanocytes. The sequence is that of Synaptotagmin-17 (SYT17) from Homo sapiens (Human).